Here is a 1857-residue protein sequence, read N- to C-terminus: MSSLSQQLKSINEKTASVALDRKSRSKIHSKSLIFDPKIASTQDYDYLYQIGLEGLEDLIEIDSRFSKFKQTLFSETTINLDRNVQTQDTLDQLNKNVEVFLSLVSPYYLLTPSTKAVEWLIRRFYINIHNGEMLLLTSLPFYNSPVFVKILNVIPKNQFPKIFEWVVGYKDLLKSPTSSSILKSFHNDAKFFELYSKYLMDQLNNHAVFKEQLVFYLANTVQLVASFTHNLGQFGETYLPVILEVVGKLLLAGSKFSSTLRNDIMLTAYSIISVLSSLVPLSADLVKSFTESILQDPTACDSNTRKQTVIVLGQLWNFYNEDNFEVDCFKNLPASKLVQDDLLKNLIEEGYKINKLLVVYFASNLPQIDAFKIFDFINVDKSETFFKIVTSKLLYYAYNNQDEAIRAKLIEAFESLLRTNKELFVKVLQNYKDGLDISQLEMQLMTTLGDSNIENIHDADIELEDEEEEEEEDQAVLDVDFSDVCNSLENYKTSTTSFLNKSSDEEFTKLFQAFAEKSRSFNIKSQKLILAKFSKAIFVSPEASISFMLRVSFTPSVPLSIRLLVLRFIKLRLKELSLSEDKIDTYLLAPILLLGLYDTNKSVRAGFAELLRVVKDTTSKFHGNKKKVKTSLFMEDQIYGNTEPSKRAIVPPQDGLEMLNVLIEDSKSILDDTVIDKSRLNYVLFQVLFKSQKSGQKKFGQLLLKTFILNQWTLPFWPIVFKYKVWNIISIENNSNGGNDDRFFFIDTDLTDYFSNRDDLIEQAKASKIDFENDVEKAIVGLVGGTSSNDKNVNKEADWLLKALEAPNKLQVAAGKRLSSVFTSFTSIDMRAKLVNKLIELLINDGDDSDNLVVDPVEVLQLLDMDHETIISVLRNVQIVSQIPEQGIVKRRRRSSNSTKQAMARDDISSIAATHLKKLTIVLDLLEFNLRKKTSDIAKPDLLQNLFRILTDLDYLGNDGNLPILYAQETLASCMLLSIVQMKDNSKSNSFKFDSNVVRADLIVNSIRLSQSPQVQNRLLLVIAELAALAPEIILHSVMPIFTFMGAHTVRQDDEFSSSALQQTIAKVIPALAANGSSSLSYEIEFLLTSFVAAFQHIPRHRRVKLFTSLTKTLSYKHSLHIILFLMGQQYSNNITRNKAHESISILEFTSAFLKNFSAQEQLEGVEKFYQLWNQIPNAQLEPNSDEFNALSSRSIFGVSILSLSKSGLLTFKSQLLNFIDKVLDSDTQNDFSNLPSLKLKIALILLDPKKPAEDKSDLLNYFRKVTSFILSSLDTFTNVSRNDVLLDNLYALLGNFLDLLPLNYFIDSIIDSLDCDQISNTLEIKIAKNFAILASRKIENELNANNIDDVIEESILQKLLPVLNKGIKKNLDIELQQAYLNAFSSIVNKFGGSTHLLVTQGNTEALINSLNIITSNSGLLSEQPEIVISSINAITSIVNVLGVKAIGLFPKIVPPSLNIWKTTTASEDESSKLLQASIILLLACLIKKIPVFMTTSLDSIFITILTSDSVDNTVRSSVLQLIVEHMELSQVLKSLCNIWNNKKFYQNDNAGNLGLYLNVLQSTIERMDKKSASSQSTLFMKWLIQAFEFRHYAFDENNKFDNNTIHRLESSFHSCGASYVMKLNDKSFRPLFANLVRWAVSGEGSNATGNTELSRLLAFFKFFSKLQDKLKSIITSYFSYLIDPVSSILNRFANGDIVDINLRRILLNSLTSSFKYDQDDYWSQQSRFDSICSPLLNQLSNIEPNIGKYLVKCVSSFISNVSSEEYNEKLVHGLIEFISNENESTTSNTKIWTIRTLKTIFQKMGEQWLSYLPTLIPYIAELLEDDDEEVELEVRNGLVRVIENVLGEPLDRYLD.

A helical membrane pass occupies residues 267-287 (LTAYSIISVLSSLVPLSADLV). Residues 1817 to 1855 (LIPYIAELLEDDDEEVELEVRNGLVRVIENVLGEPLDRY) form an HEAT repeat.

The protein belongs to the HEATR1/UTP10 family. In terms of assembly, component of the ribosomal small subunit (SSU) processome.

Its subcellular location is the nucleus. The protein resides in the nucleolus. The protein localises to the membrane. Its function is as follows. Involved in nucleolar processing of pre-18S ribosomal RNA. Involved in ribosome biosynthesis. In Debaryomyces hansenii (strain ATCC 36239 / CBS 767 / BCRC 21394 / JCM 1990 / NBRC 0083 / IGC 2968) (Yeast), this protein is U3 small nucleolar RNA-associated protein 10.